We begin with the raw amino-acid sequence, 241 residues long: Ras-like protein 1 (241 aa).

Residues 17-22 (GVGKTA), 33-39 (VETYDPT), 63-64 (AG), 138-141 (NKSD), and 168-170 (SAK) contribute to the GTP site. Residues 36-44 (YDPTIEDSY) carry the Effector region motif. The interval 190-241 (RQQASRPSLPGNSRTKTGGMGKSESFYQSDGKRGSRKDGEKHRSKPIKCVIL) is disordered. Positions 191–205 (QQASRPSLPGNSRTK) are enriched in polar residues. The segment covering 219 to 230 (DGKRGSRKDGEK) has biased composition (basic and acidic residues). Cysteine 238 bears the Cysteine methyl ester mark. A lipid anchor (S-farnesyl cysteine) is attached at cysteine 238. Positions 239-241 (VIL) are cleaved as a propeptide — removed in mature form.

This sequence belongs to the small GTPase superfamily. Ras family. In terms of assembly, interacts with farnesyltransferase beta subunit RAM1.

Its subcellular location is the cell membrane. Its activity is regulated as follows. Alternates between an inactive form bound to GDP and an active form bound to GTP. Activated by a guanine nucleotide-exchange factor (GEF) and inactivated by a GTPase-activating protein (GAP). Functionally, modulates the activity of the adenylate cyclase catalytic subunit and therefore affects the biosynthesis of cyclic-AMP. Plays a role in both surface attachment and surface recognition of appressoria, a highly specialized infection structure for plant penetration. Regulates appressorium formation by coordinated regulation of cAMP signaling and Pmk1 MAPK pathways. This chain is Ras-like protein 1, found in Pyricularia oryzae (strain 70-15 / ATCC MYA-4617 / FGSC 8958) (Rice blast fungus).